Consider the following 515-residue polypeptide: BURP domain-containing protein 9 (515 aa).

Residues 1 to 29 form the signal peptide; that stretch reads MKATGGPLPLILFLLIIIVLITAQHTAIA. Residues 292-507 enclose the BURP domain; that stretch reads YFFEDNLAPG…GRGSIIWVPV (216 aa). 3 N-linked (GlcNAc...) asparagine glycosylation sites follow: N321, N332, and N470.

Expressed in shoot and panicles.

This chain is BURP domain-containing protein 9 (BURP9), found in Oryza sativa subsp. japonica (Rice).